The primary structure comprises 192 residues: BREX protein BrxB (192 aa).

It belongs to the BrxB family.

Its function is as follows. BREX systems (bacteriophage exclusion) provide immunity against bacteriophage. Part of a type 1 BREX system. This system allows phage adsorption but prevents phage DNA replication, without degradation of the phage DNA. Methylation of bacterial DNA by PglX probably guides self/non-self discrimination. When the brxA-brxB-brxC-pglX and pglZ-brxL operons are transformed into a susceptible B.subtilis strain (BEST7003) they confer resistance to bacteriophages SPbeta, SP16, Zeta, phi3T and SP02 and partial protection to phages SP01 and SP82G (these include lytic and temperate phage). They do not protect against phages phi105, rho10 or rho14. Additionally confers a very slight reduction in efficiency of plasmid transformation. This chain is BREX protein BrxB, found in Bacillus cereus (strain H3081.97).